Reading from the N-terminus, the 278-residue chain is ATPase SWSAP1 (278 aa).

Residues 237–278 form a disordered region; that stretch reads SPEKKDSSAGSQSLTLGCDNLPGPGSPLDGILTSETGADSKT. The segment covering 269 to 278 has biased composition (polar residues); sequence TSETGADSKT.

In terms of assembly, interacts with ZSWIM7; they form a functional complex involved in homologous recombination repair and stabilize each other. Interacts with RAD51, RAD51B, RAD51C, RAD51D and XRCC3; involved in homologous recombination repair.

It localises to the nucleus. Its function is as follows. ATPase which is preferentially stimulated by single-stranded DNA and is involved in homologous recombination repair (HRR). Has a DNA-binding activity which is independent of its ATPase activity. The chain is ATPase SWSAP1 (Swsap1) from Mus musculus (Mouse).